The primary structure comprises 615 residues: Protease 4 (615 aa).

Residues 1–17 lie on the Cytoplasmic side of the membrane; that stretch reads MFQVLKFCWKVLCFIRD. A helical transmembrane segment spans residues 18-38; sequence LVMNVVFLGFVLLLVAIISFS. Residues 39 to 615 lie on the Periplasmic side of the membrane; it reads SGGKKSTALT…LYCLNCGKVK (577 aa). The active-site Proton donor/acceptor is the lysine 201. Serine 405 functions as the Nucleophile in the catalytic mechanism.

Belongs to the peptidase S49 family. Homotetramer.

Its subcellular location is the cell inner membrane. Its function is as follows. Digests cleaved signal peptides in vitro, its in vivo function is unknown. This activity is necessary to maintain proper secretion of mature proteins across the membrane. The polypeptide is Protease 4 (sppA) (Haemophilus influenzae (strain ATCC 51907 / DSM 11121 / KW20 / Rd)).